A 570-amino-acid chain; its full sequence is Sulfite reductase [NADPH] hemoprotein beta-component (570 aa).

C434, C440, C479, and C483 together coordinate [4Fe-4S] cluster. Siroheme is bound at residue C483.

The protein belongs to the nitrite and sulfite reductase 4Fe-4S domain family. In terms of assembly, alpha(8)-beta(8). The alpha component is a flavoprotein, the beta component is a hemoprotein. Requires siroheme as cofactor. [4Fe-4S] cluster serves as cofactor.

It carries out the reaction hydrogen sulfide + 3 NADP(+) + 3 H2O = sulfite + 3 NADPH + 4 H(+). It participates in sulfur metabolism; hydrogen sulfide biosynthesis; hydrogen sulfide from sulfite (NADPH route): step 1/1. Functionally, component of the sulfite reductase complex that catalyzes the 6-electron reduction of sulfite to sulfide. This is one of several activities required for the biosynthesis of L-cysteine from sulfate. The sequence is that of Sulfite reductase [NADPH] hemoprotein beta-component from Escherichia coli O6:H1 (strain CFT073 / ATCC 700928 / UPEC).